We begin with the raw amino-acid sequence, 1488 residues long: Chromosome partition protein MukB (1488 aa).

34–41 serves as a coordination point for ATP; that stretch reads GGNGAGKS. Coiled-coil stretches lie at residues 326-418, 444-472, and 509-602; these read LEAD…QYNQ, LDTF…QTAH, and RHLA…QRAP. Positions 666–783 are flexible hinge; it reads PGGAEDQRLN…SLPIFGRAAR (118 aa). 3 coiled-coil regions span residues 835–923, 977–1116, and 1209–1265; these read EAEI…AKLE, EMLS…AKAG, and VEAI…LQSV. Positions 1049–1074 are disordered; sequence ADSGAEERARQRRDELHAQLSNNRSR. Residues 1051–1065 show a composition bias toward basic and acidic residues; it reads SGAEERARQRRDELH.

It belongs to the SMC family. MukB subfamily. As to quaternary structure, homodimerization via its hinge domain. Binds to DNA via its C-terminal region. Interacts, and probably forms a ternary complex, with MukE and MukF via its C-terminal region. The complex formation is stimulated by calcium or magnesium. Interacts with tubulin-related protein FtsZ.

It localises to the cytoplasm. The protein resides in the nucleoid. Its function is as follows. Plays a central role in chromosome condensation, segregation and cell cycle progression. Functions as a homodimer, which is essential for chromosome partition. Involved in negative DNA supercoiling in vivo, and by this means organize and compact chromosomes. May achieve or facilitate chromosome segregation by condensation DNA from both sides of a centrally located replisome during cell division. This chain is Chromosome partition protein MukB, found in Salmonella typhimurium (strain LT2 / SGSC1412 / ATCC 700720).